Reading from the N-terminus, the 213-residue chain is Large ribosomal subunit protein uL23 (213 aa).

Positions 1-117 are large ribosomal subunit protein uL23; that stretch reads MNHNEIIKYP…KSTSELKLEE (117 aa). A unknown region spans residues 118 to 213; that stretch reads KIAAKIAAKE…TTKKTTTKKV (96 aa).

The protein belongs to the universal ribosomal protein uL23 family. Part of the 50S ribosomal subunit. Contacts protein L29, and trigger factor when it is bound to the ribosome.

In terms of biological role, one of the early assembly proteins it binds 23S rRNA. One of the proteins that surrounds the polypeptide exit tunnel on the outside of the ribosome. Forms the main docking site for trigger factor binding to the ribosome. The polypeptide is Large ribosomal subunit protein uL23 (Mycoplasma mobile (strain ATCC 43663 / 163K / NCTC 11711) (Mesomycoplasma mobile)).